The sequence spans 599 residues: Aspartate--tRNA(Asp/Asn) ligase (599 aa).

Position 169 (Glu169) interacts with L-aspartate. An aspartate region spans residues 193–196; the sequence is QLFK. Arg215 contacts L-aspartate. ATP is bound by residues 215–217 and Gln224; that span reads RDE. Position 447 (His447) interacts with L-aspartate. An ATP-binding site is contributed by Glu481. Arg488 provides a ligand contact to L-aspartate. 533–536 contributes to the ATP binding site; that stretch reads GWDR.

It belongs to the class-II aminoacyl-tRNA synthetase family. Type 1 subfamily. In terms of assembly, homodimer.

Its subcellular location is the cytoplasm. It catalyses the reaction tRNA(Asx) + L-aspartate + ATP = L-aspartyl-tRNA(Asx) + AMP + diphosphate. Aspartyl-tRNA synthetase with relaxed tRNA specificity since it is able to aspartylate not only its cognate tRNA(Asp) but also tRNA(Asn). Reaction proceeds in two steps: L-aspartate is first activated by ATP to form Asp-AMP and then transferred to the acceptor end of tRNA(Asp/Asn). The chain is Aspartate--tRNA(Asp/Asn) ligase from Pseudarthrobacter chlorophenolicus (strain ATCC 700700 / DSM 12829 / CIP 107037 / JCM 12360 / KCTC 9906 / NCIMB 13794 / A6) (Arthrobacter chlorophenolicus).